Consider the following 377-residue polypeptide: Bifunctional enzyme IspD/IspF (377 aa).

Positions 1 to 221 (MTTAAIIVAA…ERILRQDMDV (221 aa)) are 2-C-methyl-D-erythritol 4-phosphate cytidylyltransferase. The tract at residues 222 to 377 (RLGNGYDVHR…ALATACLVKP (156 aa)) is 2-C-methyl-D-erythritol 2,4-cyclodiphosphate synthase. D228 and H230 together coordinate a divalent metal cation. Residues 228 to 230 (DVH) and 254 to 255 (HS) contribute to the 4-CDP-2-C-methyl-D-erythritol 2-phosphate site. H262 is a binding site for a divalent metal cation. 4-CDP-2-C-methyl-D-erythritol 2-phosphate contacts are provided by residues 276–278 (DIG), 352–355 (TTSE), F359, and R362.

The protein in the N-terminal section; belongs to the IspD/TarI cytidylyltransferase family. IspD subfamily. In the C-terminal section; belongs to the IspF family. A divalent metal cation serves as cofactor.

It carries out the reaction 2-C-methyl-D-erythritol 4-phosphate + CTP + H(+) = 4-CDP-2-C-methyl-D-erythritol + diphosphate. The enzyme catalyses 4-CDP-2-C-methyl-D-erythritol 2-phosphate = 2-C-methyl-D-erythritol 2,4-cyclic diphosphate + CMP. It participates in isoprenoid biosynthesis; isopentenyl diphosphate biosynthesis via DXP pathway; isopentenyl diphosphate from 1-deoxy-D-xylulose 5-phosphate: step 2/6. It functions in the pathway isoprenoid biosynthesis; isopentenyl diphosphate biosynthesis via DXP pathway; isopentenyl diphosphate from 1-deoxy-D-xylulose 5-phosphate: step 4/6. In terms of biological role, bifunctional enzyme that catalyzes the formation of 4-diphosphocytidyl-2-C-methyl-D-erythritol from CTP and 2-C-methyl-D-erythritol 4-phosphate (MEP) (IspD), and catalyzes the conversion of 4-diphosphocytidyl-2-C-methyl-D-erythritol 2-phosphate (CDP-ME2P) to 2-C-methyl-D-erythritol 2,4-cyclodiphosphate (ME-CPP) with a corresponding release of cytidine 5-monophosphate (CMP) (IspF). The sequence is that of Bifunctional enzyme IspD/IspF from Ruegeria pomeroyi (strain ATCC 700808 / DSM 15171 / DSS-3) (Silicibacter pomeroyi).